A 90-amino-acid polypeptide reads, in one-letter code: Probable Fe(2+)-trafficking protein (90 aa).

It belongs to the Fe(2+)-trafficking protein family.

In terms of biological role, could be a mediator in iron transactions between iron acquisition and iron-requiring processes, such as synthesis and/or repair of Fe-S clusters in biosynthetic enzymes. The polypeptide is Probable Fe(2+)-trafficking protein (Halorhodospira halophila (strain DSM 244 / SL1) (Ectothiorhodospira halophila (strain DSM 244 / SL1))).